Consider the following 305-residue polypeptide: UDP-N-acetylenolpyruvoylglucosamine reductase 2 (305 aa).

The FAD-binding PCMH-type domain occupies 33 to 197 (VGGKADVFVA…LEARFELEEG (165 aa)). Arginine 176 is an active-site residue. The Proton donor role is filled by serine 226. The active site involves glutamate 296.

Belongs to the MurB family. It depends on FAD as a cofactor.

Its subcellular location is the cytoplasm. It catalyses the reaction UDP-N-acetyl-alpha-D-muramate + NADP(+) = UDP-N-acetyl-3-O-(1-carboxyvinyl)-alpha-D-glucosamine + NADPH + H(+). It participates in cell wall biogenesis; peptidoglycan biosynthesis. Its function is as follows. Cell wall formation. The polypeptide is UDP-N-acetylenolpyruvoylglucosamine reductase 2 (Bacillus cereus (strain ZK / E33L)).